The following is a 179-amino-acid chain: Putative undecaprenyl-phosphate N-acetylgalactosaminyl 1-phosphate transferase (179 aa).

Residues 39-59 form a helical membrane-spanning segment; sequence IWFALIGLAIALPMIAVFSIL.

The protein belongs to the bacterial sugar transferase family.

The protein localises to the cell membrane. It carries out the reaction di-trans,octa-cis-undecaprenyl phosphate + UDP-N-acetyl-alpha-D-galactosamine = N-acetyl-alpha-D-galactosaminyl-di-trans,octa-cis-undecaprenyl diphosphate + UMP. It functions in the pathway cell wall biogenesis; teichuronic acid biosynthesis. In terms of biological role, might mediate the very first reaction in teichuronic synthesis, i.e. the formation of lipid-linked N-acetylglucosamine. This Bacillus subtilis (strain 168) protein is Putative undecaprenyl-phosphate N-acetylgalactosaminyl 1-phosphate transferase (tuaA).